The following is a 430-amino-acid chain: Tol-Pal system protein TolB (430 aa).

Residues 1–21 form the signal peptide; sequence MKQALRVAFGFLMLWAAVLHA.

It belongs to the TolB family. In terms of assembly, the Tol-Pal system is composed of five core proteins: the inner membrane proteins TolA, TolQ and TolR, the periplasmic protein TolB and the outer membrane protein Pal. They form a network linking the inner and outer membranes and the peptidoglycan layer.

It is found in the periplasm. Functionally, part of the Tol-Pal system, which plays a role in outer membrane invagination during cell division and is important for maintaining outer membrane integrity. TolB occupies a key intermediary position in the Tol-Pal system because it communicates directly with both membrane-embedded components, Pal in the outer membrane and TolA in the inner membrane. The polypeptide is Tol-Pal system protein TolB (Salmonella choleraesuis (strain SC-B67)).